Consider the following 267-residue polypeptide: Phosphate import ATP-binding protein PstB (267 aa).

The region spanning 21-262 (IEVKNLNFYY…PREKRTQDYI (242 aa)) is the ABC transporter domain. 53–60 (GPSGCGKS) is a binding site for ATP.

The protein belongs to the ABC transporter superfamily. Phosphate importer (TC 3.A.1.7) family. In terms of assembly, the complex is composed of two ATP-binding proteins (PstB), two transmembrane proteins (PstC and PstA) and a solute-binding protein (PstS).

It is found in the cell inner membrane. It carries out the reaction phosphate(out) + ATP + H2O = ADP + 2 phosphate(in) + H(+). Part of the ABC transporter complex PstSACB involved in phosphate import. Responsible for energy coupling to the transport system. This Mesorhizobium japonicum (strain LMG 29417 / CECT 9101 / MAFF 303099) (Mesorhizobium loti (strain MAFF 303099)) protein is Phosphate import ATP-binding protein PstB.